A 195-amino-acid polypeptide reads, in one-letter code: Envelope glycoprotein L (195 aa).

Residues 1–25 (MKIYRVLVHLSFVLGMFTKTNTVLA) form the signal peptide. The segment at 28 to 157 (KYDLVHGFMR…LIAPADISCY (130 aa)) is interaction with gH. One can recognise a gL alphaherpesvirus-type domain in the interval 28 to 195 (KYDLVHGFMR…TTSGSRRANA (168 aa)). 2 disulfide bridges follow: cysteine 49/cysteine 78 and cysteine 156/cysteine 178.

Belongs to the herpesviridae glycoprotein L (gL) family. Alphaherpesvirinae gL subfamily. In terms of assembly, interacts with glycoprotein H (gH); this interaction is necessary for the correct processing and cell surface expression of gH. The heterodimer gH/gL seems to interact with gB trimers during fusion.

The protein resides in the virion membrane. It localises to the host cell membrane. The protein localises to the host Golgi apparatus. Its subcellular location is the host trans-Golgi network. Functionally, the heterodimer glycoprotein H-glycoprotein L is required for the fusion of viral and plasma membranes leading to virus entry into the host cell. Acts as a functional inhibitor of gH and maintains gH in an inhibited form. Upon binding to host integrins, gL dissociates from gH leading to activation of the viral fusion glycoproteins gB and gH. In Gallus gallus (Chicken), this protein is Envelope glycoprotein L.